Reading from the N-terminus, the 142-residue chain is Transcriptional regulator MraZ (142 aa).

2 consecutive SpoVT-AbrB domains span residues 5–47 (EYPY…PLAS) and 76–119 (ANKA…NPER).

This sequence belongs to the MraZ family. As to quaternary structure, forms oligomers.

The protein resides in the cytoplasm. It is found in the nucleoid. The sequence is that of Transcriptional regulator MraZ from Deinococcus geothermalis (strain DSM 11300 / CIP 105573 / AG-3a).